A 202-amino-acid chain; its full sequence is Protein GrpE 1 (202 aa).

The protein belongs to the GrpE family. Homodimer.

The protein localises to the cytoplasm. In terms of biological role, participates actively in the response to hyperosmotic and heat shock by preventing the aggregation of stress-denatured proteins, in association with DnaK and GrpE. It is the nucleotide exchange factor for DnaK and may function as a thermosensor. Unfolded proteins bind initially to DnaJ; upon interaction with the DnaJ-bound protein, DnaK hydrolyzes its bound ATP, resulting in the formation of a stable complex. GrpE releases ADP from DnaK; ATP binding to DnaK triggers the release of the substrate protein, thus completing the reaction cycle. Several rounds of ATP-dependent interactions between DnaJ, DnaK and GrpE are required for fully efficient folding. This chain is Protein GrpE 1, found in Buchnera aphidicola subsp. Schizaphis graminum (strain Sg).